A 65-amino-acid polypeptide reads, in one-letter code: Ovary maturating parsin (65 aa).

The span at 17–28 shows a compositional bias: low complexity; sequence PAAPAVAPAAPA. The tract at residues 17–36 is disordered; that stretch reads PAAPAVAPAAPASWPHQQRR.

In terms of assembly, monomer.

Its function is as follows. Neurohormone that anticipates ovarian maturation. Acts as a true gonadotropin and stimulates vitellogenin biosynthesis. The polypeptide is Ovary maturating parsin (Locusta migratoria (Migratory locust)).